We begin with the raw amino-acid sequence, 308 residues long: N-acetyl-gamma-glutamyl-phosphate reductase (308 aa).

Cys-117 is a catalytic residue.

It belongs to the NAGSA dehydrogenase family. Type 2 subfamily.

It is found in the cytoplasm. The enzyme catalyses N-acetyl-L-glutamate 5-semialdehyde + phosphate + NADP(+) = N-acetyl-L-glutamyl 5-phosphate + NADPH + H(+). Its pathway is amino-acid biosynthesis; L-arginine biosynthesis; N(2)-acetyl-L-ornithine from L-glutamate: step 3/4. In terms of biological role, catalyzes the NADPH-dependent reduction of N-acetyl-5-glutamyl phosphate to yield N-acetyl-L-glutamate 5-semialdehyde. The protein is N-acetyl-gamma-glutamyl-phosphate reductase of Sinorhizobium fredii (strain NBRC 101917 / NGR234).